Reading from the N-terminus, the 289-residue chain is Heme oxygenase 1, chloroplastic (289 aa).

A chloroplast-targeting transit peptide spans 1–64 (MAPAAASLTA…SASSSRRMVV (64 aa)). Residue His96 participates in heme b binding.

Belongs to the heme oxygenase family.

Its subcellular location is the plastid. The protein resides in the chloroplast. It catalyses the reaction heme b + 3 reduced [NADPH--hemoprotein reductase] + 3 O2 = biliverdin IXalpha + CO + Fe(2+) + 3 oxidized [NADPH--hemoprotein reductase] + 3 H2O + H(+). Its function is as follows. Catalyzes the opening of the heme ring to form the open-chain tetrapyrrole biliverdin IX with the release of iron and carbon monoxide (CO). Is a key enzyme in the synthesis of the chromophore of the phytochrome family of plant photoreceptors. Essential for photoperiod response and repression of flowering through cytochromes that inhibit flowering by affecting both HD1 and EHD1 flowering pathways. The chain is Heme oxygenase 1, chloroplastic (HO1) from Oryza sativa subsp. japonica (Rice).